The sequence spans 317 residues: Transaldolase (317 aa).

The active-site Schiff-base intermediate with substrate is Lys-126.

The protein belongs to the transaldolase family. Type 1 subfamily. As to quaternary structure, homodimer.

It is found in the cytoplasm. It catalyses the reaction D-sedoheptulose 7-phosphate + D-glyceraldehyde 3-phosphate = D-erythrose 4-phosphate + beta-D-fructose 6-phosphate. It participates in carbohydrate degradation; pentose phosphate pathway; D-glyceraldehyde 3-phosphate and beta-D-fructose 6-phosphate from D-ribose 5-phosphate and D-xylulose 5-phosphate (non-oxidative stage): step 2/3. Its function is as follows. Transaldolase is important for the balance of metabolites in the pentose-phosphate pathway. The sequence is that of Transaldolase from Burkholderia orbicola (strain MC0-3).